A 366-amino-acid chain; its full sequence is Tudor domain-containing protein 10 (366 aa).

One can recognise an RRM domain in the interval 34-107 (TEVYVGNLPL…RKLFVNTSKR (74 aa)). Residues 210–317 (FWAMHVTEAL…PLTQPFMLEK (108 aa)) enclose the Tudor domain. The stretch at 216 to 237 (TEALHQNMQALFSTLAQAEEQQ) forms a coiled coil.

The polypeptide is Tudor domain-containing protein 10 (TDRD10) (Homo sapiens (Human)).